The sequence spans 615 residues: Prolycopene isomerase, chloroplastic (615 aa).

A chloroplast-targeting transit peptide spans 1–62 (MSTSIFETPL…PKPLNFGFCR (62 aa)).

This sequence belongs to the carotenoid/retinoid oxidoreductase family. CrtISO subfamily. NAD(+) serves as cofactor. Requires NADP(+) as cofactor. It depends on FAD as a cofactor.

The protein localises to the plastid. It is found in the chloroplast membrane. The catalysed reaction is 7,7',9,9'-tetra-cis-lycopene = all-trans-lycopene. It participates in carotenoid biosynthesis; lycopene biosynthesis. In terms of biological role, carotene cis-trans-isomerase that converts 7,9,9'-tri-cis-neurosporene to 9'-cis-neurosporene and 7,9,9',7'-tetra-cis-lycopene (also known as prolycopene) into all-trans-lycopene. Isomerization requires redox-active components, suggesting that isomerization is achieved by a reversible redox reaction acting at specific double bonds. Isomerizes adjacent cis-double bonds at C7 and C9 pairwise into the trans-configuration, but is incapable of isomerizing single cis-double bonds at C9 and C9'. This Daucus carota (Wild carrot) protein is Prolycopene isomerase, chloroplastic (CRTISO).